Reading from the N-terminus, the 147-residue chain is Ubiquitin-conjugating enzyme E2 D1 (147 aa).

Residues 1 to 147 (MALKRIQKEL…AREWTQKYAM (147 aa)) form the UBC core domain. Cys85 (glycyl thioester intermediate) is an active-site residue.

Belongs to the ubiquitin-conjugating enzyme family. As to quaternary structure, component of a E3 ubiquitin ligase complex containing UBE2D1, SIAH1, CACYBP/SIP, SKP1, APC and TBL1X. Interacts with RNF11. Post-translationally, autoubiquitinated.

It is found in the cytoplasm. The enzyme catalyses S-ubiquitinyl-[E1 ubiquitin-activating enzyme]-L-cysteine + [E2 ubiquitin-conjugating enzyme]-L-cysteine = [E1 ubiquitin-activating enzyme]-L-cysteine + S-ubiquitinyl-[E2 ubiquitin-conjugating enzyme]-L-cysteine.. The catalysed reaction is S-ubiquitinyl-[E1 ubiquitin-activating enzyme]-L-cysteine + [acceptor protein]-L-lysine = [E1 ubiquitin-activating enzyme]-L-cysteine + N(6)-monoubiquitinyl-[acceptor protein]-L-lysine.. The protein operates within protein modification; protein ubiquitination. Functionally, accepts ubiquitin from the E1 complex and catalyzes its covalent attachment to other proteins. In vitro catalyzes 'Lys-48'-linked polyubiquitination. Mediates the selective degradation of short-lived and abnormal proteins. Functions in the E6/E6-AP-induced ubiquitination of p53/TP53. Mediates ubiquitination of PEX5 and auto-ubiquitination of STUB1, TRAF6 and TRIM63/MURF1. Ubiquitinates STUB1-associated HSP90AB1 in vitro. Lacks inherent specificity for any particular lysine residue of ubiquitin. Essential for viral activation of IRF3. Mediates polyubiquitination of CYP3A4. The sequence is that of Ubiquitin-conjugating enzyme E2 D1 (UBE2D1) from Bos taurus (Bovine).